The chain runs to 142 residues: Large ribosomal subunit protein uL13 (142 aa).

Belongs to the universal ribosomal protein uL13 family. As to quaternary structure, part of the 50S ribosomal subunit.

Its function is as follows. This protein is one of the early assembly proteins of the 50S ribosomal subunit, although it is not seen to bind rRNA by itself. It is important during the early stages of 50S assembly. The polypeptide is Large ribosomal subunit protein uL13 (Francisella philomiragia subsp. philomiragia (strain ATCC 25017 / CCUG 19701 / FSC 153 / O#319-036)).